The following is a 159-amino-acid chain: 6,7-dimethyl-8-ribityllumazine synthase (159 aa).

5-amino-6-(D-ribitylamino)uracil contacts are provided by residues Trp26, 58–60 (AIE), and 80–82 (VVI). 85–86 (ET) provides a ligand contact to (2S)-2-hydroxy-3-oxobutyl phosphate. His88 serves as the catalytic Proton donor. Asn113 serves as a coordination point for 5-amino-6-(D-ribitylamino)uracil. Position 127 (Arg127) interacts with (2S)-2-hydroxy-3-oxobutyl phosphate.

It belongs to the DMRL synthase family. As to quaternary structure, homopentamer.

The catalysed reaction is (2S)-2-hydroxy-3-oxobutyl phosphate + 5-amino-6-(D-ribitylamino)uracil = 6,7-dimethyl-8-(1-D-ribityl)lumazine + phosphate + 2 H2O + H(+). It participates in cofactor biosynthesis; riboflavin biosynthesis; riboflavin from 2-hydroxy-3-oxobutyl phosphate and 5-amino-6-(D-ribitylamino)uracil: step 1/2. Functionally, catalyzes the formation of 6,7-dimethyl-8-ribityllumazine by condensation of 5-amino-6-(D-ribitylamino)uracil with 3,4-dihydroxy-2-butanone 4-phosphate. This is the penultimate step in the biosynthesis of riboflavin. The polypeptide is 6,7-dimethyl-8-ribityllumazine synthase (Mycolicibacterium gilvum (strain PYR-GCK) (Mycobacterium gilvum (strain PYR-GCK))).